The following is a 42-amino-acid chain: Photosystem II reaction center protein J (42 aa).

The helical transmembrane segment at 10–30 (IPLWLVGTVVGTLALGLVALF) threads the bilayer.

Belongs to the PsbJ family. As to quaternary structure, PSII is composed of 1 copy each of membrane proteins PsbA, PsbB, PsbC, PsbD, PsbE, PsbF, PsbH, PsbI, PsbJ, PsbK, PsbL, PsbM, PsbT, PsbX, PsbY, PsbZ, Psb30/Ycf12, at least 3 peripheral proteins of the oxygen-evolving complex and a large number of cofactors. It forms dimeric complexes.

The protein resides in the plastid. The protein localises to the chloroplast thylakoid membrane. In terms of biological role, one of the components of the core complex of photosystem II (PSII). PSII is a light-driven water:plastoquinone oxidoreductase that uses light energy to abstract electrons from H(2)O, generating O(2) and a proton gradient subsequently used for ATP formation. It consists of a core antenna complex that captures photons, and an electron transfer chain that converts photonic excitation into a charge separation. The polypeptide is Photosystem II reaction center protein J (Oltmannsiellopsis viridis (Marine flagellate)).